Reading from the N-terminus, the 249-residue chain is Phosphate import ATP-binding protein PstB (249 aa).

One can recognise an ABC transporter domain in the interval 3–244; it reads IEANDVHVYY…PKKKRTQNYI (242 aa). 35-42 contributes to the ATP binding site; that stretch reads GPSGCGKS.

It belongs to the ABC transporter superfamily. Phosphate importer (TC 3.A.1.7) family. The complex is composed of two ATP-binding proteins (PstB), two transmembrane proteins (PstC and PstA) and a solute-binding protein (PstS).

The protein localises to the cell inner membrane. The enzyme catalyses phosphate(out) + ATP + H2O = ADP + 2 phosphate(in) + H(+). Functionally, part of the ABC transporter complex PstSACB involved in phosphate import. Responsible for energy coupling to the transport system. The sequence is that of Phosphate import ATP-binding protein PstB from Cytophaga hutchinsonii (strain ATCC 33406 / DSM 1761 / CIP 103989 / NBRC 15051 / NCIMB 9469 / D465).